The following is a 425-amino-acid chain: Serine--tRNA ligase (425 aa).

230-232 contributes to the L-serine binding site; sequence TAE. ATP is bound at residue 261 to 263; it reads RSE. Glu284 lines the L-serine pocket. Position 348 to 351 (348 to 351) interacts with ATP; it reads EISS. L-serine is bound at residue Ser384.

This sequence belongs to the class-II aminoacyl-tRNA synthetase family. Type-1 seryl-tRNA synthetase subfamily. As to quaternary structure, homodimer. The tRNA molecule binds across the dimer.

It localises to the cytoplasm. It carries out the reaction tRNA(Ser) + L-serine + ATP = L-seryl-tRNA(Ser) + AMP + diphosphate + H(+). The enzyme catalyses tRNA(Sec) + L-serine + ATP = L-seryl-tRNA(Sec) + AMP + diphosphate + H(+). It participates in aminoacyl-tRNA biosynthesis; selenocysteinyl-tRNA(Sec) biosynthesis; L-seryl-tRNA(Sec) from L-serine and tRNA(Sec): step 1/1. Catalyzes the attachment of serine to tRNA(Ser). Is also able to aminoacylate tRNA(Sec) with serine, to form the misacylated tRNA L-seryl-tRNA(Sec), which will be further converted into selenocysteinyl-tRNA(Sec). This is Serine--tRNA ligase from Streptococcus pyogenes serotype M6 (strain ATCC BAA-946 / MGAS10394).